The primary structure comprises 293 residues: Nucleotide-binding protein BCQ_4976 (293 aa).

Position 14–21 (14–21) interacts with ATP; the sequence is GMSGAGKT. Residue 65–68 coordinates GTP; the sequence is DLRG.

Belongs to the RapZ-like family.

In terms of biological role, displays ATPase and GTPase activities. The polypeptide is Nucleotide-binding protein BCQ_4976 (Bacillus cereus (strain Q1)).